Here is a 127-residue protein sequence, read N- to C-terminus: Large ribosomal subunit protein bL17 (127 aa).

It belongs to the bacterial ribosomal protein bL17 family. Part of the 50S ribosomal subunit. Contacts protein L32.

The sequence is that of Large ribosomal subunit protein bL17 from Mannheimia succiniciproducens (strain KCTC 0769BP / MBEL55E).